The following is a 148-amino-acid chain: Large ribosomal subunit protein uL22c (148 aa).

The protein belongs to the universal ribosomal protein uL22 family. As to quaternary structure, part of the 50S ribosomal subunit.

It localises to the plastid. The protein resides in the chloroplast. Functionally, this protein binds specifically to 23S rRNA. The globular domain of the protein is located near the polypeptide exit tunnel on the outside of the subunit, while an extended beta-hairpin is found that lines the wall of the exit tunnel in the center of the 70S ribosome. This chain is Large ribosomal subunit protein uL22c (rpl22), found in Zea mays (Maize).